A 221-amino-acid chain; its full sequence is Cytochrome c biogenesis ATP-binding export protein CcmA (221 aa).

Residues 14–221 (LACHDVSCLR…FDLLDESHFS (208 aa)) enclose the ABC transporter domain. 46-53 (GANGIGKS) contacts ATP.

The protein belongs to the ABC transporter superfamily. CcmA exporter (TC 3.A.1.107) family. In terms of assembly, the complex is composed of two ATP-binding proteins (CcmA) and two transmembrane proteins (CcmB).

The protein localises to the cell inner membrane. It carries out the reaction heme b(in) + ATP + H2O = heme b(out) + ADP + phosphate + H(+). In terms of biological role, part of the ABC transporter complex CcmAB involved in the biogenesis of c-type cytochromes; once thought to export heme, this seems not to be the case, but its exact role is uncertain. Responsible for energy coupling to the transport system. This chain is Cytochrome c biogenesis ATP-binding export protein CcmA, found in Zymomonas mobilis subsp. mobilis (strain ATCC 31821 / ZM4 / CP4).